Here is a 161-residue protein sequence, read N- to C-terminus: GTP-dependent dephospho-CoA kinase (161 aa).

Positions 40, 41, 42, 59, 112, and 135 each coordinate GTP.

The protein belongs to the GTP-dependent DPCK family.

The enzyme catalyses 3'-dephospho-CoA + GTP = GDP + CoA + H(+). The protein operates within cofactor biosynthesis; coenzyme A biosynthesis. In terms of biological role, catalyzes the GTP-dependent phosphorylation of the 3'-hydroxyl group of dephosphocoenzyme A to form coenzyme A (CoA). This Methanocorpusculum labreanum (strain ATCC 43576 / DSM 4855 / Z) protein is GTP-dependent dephospho-CoA kinase.